Here is a 193-residue protein sequence, read N- to C-terminus: Holliday junction branch migration complex subunit RuvA (193 aa).

Positions 1-64 are domain I; that stretch reads MIGRIAGTLL…EDAHLLYGFL (64 aa). The tract at residues 65–139 is domain II; the sequence is TPPERSTFRE…GKLGADLGPL (75 aa). Positions 139–143 are flexible linker; sequence LAGAA. The tract at residues 144-193 is domain III; it reads SPSDHATDILNALVALGYSEKEALAAIKNVPAGTGVSEGIKLSLKALSKA.

This sequence belongs to the RuvA family. As to quaternary structure, homotetramer. Forms an RuvA(8)-RuvB(12)-Holliday junction (HJ) complex. HJ DNA is sandwiched between 2 RuvA tetramers; dsDNA enters through RuvA and exits via RuvB. An RuvB hexamer assembles on each DNA strand where it exits the tetramer. Each RuvB hexamer is contacted by two RuvA subunits (via domain III) on 2 adjacent RuvB subunits; this complex drives branch migration. In the full resolvosome a probable DNA-RuvA(4)-RuvB(12)-RuvC(2) complex forms which resolves the HJ.

The protein localises to the cytoplasm. The RuvA-RuvB-RuvC complex processes Holliday junction (HJ) DNA during genetic recombination and DNA repair, while the RuvA-RuvB complex plays an important role in the rescue of blocked DNA replication forks via replication fork reversal (RFR). RuvA specifically binds to HJ cruciform DNA, conferring on it an open structure. The RuvB hexamer acts as an ATP-dependent pump, pulling dsDNA into and through the RuvAB complex. HJ branch migration allows RuvC to scan DNA until it finds its consensus sequence, where it cleaves and resolves the cruciform DNA. The chain is Holliday junction branch migration complex subunit RuvA from Burkholderia mallei (strain NCTC 10229).